The primary structure comprises 760 residues: Probable myosin-binding protein 4 (760 aa).

The chain crosses the membrane as a helical span at residues 26-46 (WFLILLMFIDALLSYLLVWFA). Disordered regions lie at residues 161–189 (SRGRNSSSKPNIPAPRHLTRRGSGGSLKK), 247–273 (SEKRTHKSRRRKSFDDKKMSNHKQPVL), 292–311 (SMLGYNLENRTRQKQPVKAK), and 348–595 (EAEV…KHSA). Residues 352–366 (SGSSSPSGGEFLSPS) are compositionally biased toward low complexity. Over residues 371–383 (ASREIRIQEHDDS) the composition is skewed to basic and acidic residues. Over residues 385–394 (DFSQNITSSA) the composition is skewed to polar residues. Residues 388-416 (QNITSSAMEIEEFEAAIEQKESDHMDVSG) are a coiled coil. Residues 404 to 413 (IEQKESDHMD) are compositionally biased toward basic and acidic residues. 2 stretches are compositionally biased toward acidic residues: residues 446–458 (LEQEQSGEEESEV) and 517–526 (EEDVDNEESE). Composition is skewed to basic and acidic residues over residues 537 to 550 (VKEEHSAKEEHGDH) and 562 to 580 (SKEEPSLEHSDKDSLKITE). In terms of domain architecture, GTD-binding spans 611-709 (SLVEVLKQQL…DLEMELEYYR (99 aa)). Residues 725-760 (GILGNTEETNVTSPTDETSIKDSTDTKLTGSPSAEN) are disordered. Composition is skewed to polar residues over residues 730-741 (TEETNVTSPTDE) and 750-760 (TKLTGSPSAEN).

It localises to the endomembrane system. Membrane-anchored myosin receptors that define a distinct, plant-specific transport vesicle compartment. The chain is Probable myosin-binding protein 4 from Arabidopsis thaliana (Mouse-ear cress).